The chain runs to 156 residues: MTDETRQGRLILIDGDACPVKEEIYTCAYRHKIPVRLVAASYLRHPDHPLITMVMAGDAFDAADDVIAEAAAPGTLVVTGDILLAERCLEAGSVVLNHKGGAYTANSIGAQVATRAIMADIRAGLDGQGIGGQKPFSKADRSAFSNALETALRRLK.

Belongs to the UPF0178 family.

In Jannaschia sp. (strain CCS1), this protein is UPF0178 protein Jann_2168.